Here is a 1876-residue protein sequence, read N- to C-terminus: Phenolphthiocerol/phthiocerol polyketide synthase subunit A (1876 aa).

Residues 9 to 83 (ADLRHWLIDY…ALAAYLAAPE (75 aa)) enclose the Carrier 1 domain. Ser43 carries the O-(pantetheine 4'-phosphoryl)serine modification. The region spanning 101-526 (DEPIAVVGMG…GTNAHVVIEQ (426 aa)) is the Ketosynthase family 3 (KS3) domain. Catalysis depends on for beta-ketoacyl synthase activity residues Cys273, His408, and His448. The acyltransferase stretch occupies residues 624 to 950 (EGSPGPGTVF…NLNKAHTIHP (327 aa)). The For malonyltransferase activity role is filled by Ser720. The tract at residues 997–1112 (HTTVATVSAS…AQLSSSPSDS (116 aa)) is N-terminal hotdog fold. In terms of domain architecture, PKS/mFAS DH spans 997 to 1267 (HTTVATVSAS…YRALDFGLDV (271 aa)). His1027 acts as the Proton acceptor; for dehydratase activity in catalysis. The disordered stretch occupies residues 1104–1130 (QLSSSPSDSASSLNEHHRANGQPPERA). The segment covering 1106–1115 (SSSPSDSASS) has biased composition (low complexity). The interval 1130 to 1267 (AHRDLIPDLA…YRALDFGLDV (138 aa)) is C-terminal hotdog fold. Catalysis depends on Asp1186, which acts as the Proton donor; for dehydratase activity. The interval 1491 to 1728 (AAYLITGGLG…DGYDVAQAVV (238 aa)) is beta-ketoacyl reductase. 1492-1551 (AYLITGGLGALGLLMADWLADRGAHRLVLTGRTPLPPRRDWQLDTLDTELRRRIDAIRAL) is a binding site for NADP(+). Positions 1759–1836 (EVRSELEQGL…SLASYLAKRV (78 aa)) constitute a Carrier 2 domain. Ser1796 carries the post-translational modification O-(pantetheine 4'-phosphoryl)serine.

NADP(+) serves as cofactor. Requires pantetheine 4'-phosphate as cofactor.

The catalysed reaction is icosanoyl-[(phenol)carboxyphthiodiolenone synthase] + 2 (S)-methylmalonyl-CoA + 3 malonyl-CoA + 5 NADPH + 10 H(+) = C32-carboxyphthiodiolenone-[(phenol)carboxyphthiodiolenone synthase] + 5 CO2 + 5 NADP(+) + 5 CoA + 2 H2O. The enzyme catalyses docosanoyl-[(phenol)carboxyphthiodiolenone synthase] + 2 (S)-methylmalonyl-CoA + 3 malonyl-CoA + 5 NADPH + 10 H(+) = C34-carboxyphthiodiolenone-[(phenol)carboxyphthiodiolenone synthase] + 5 CO2 + 5 NADP(+) + 5 CoA + 2 H2O. It catalyses the reaction 17-(4-hydroxyphenyl)heptadecanoyl-[(phenol)carboxyphthiodiolenone synthase] + 2 (S)-methylmalonyl-CoA + 3 malonyl-CoA + 5 NADPH + 10 H(+) = C35-(phenol)carboxyphthiodiolenone-[(phenol)carboxyphthiodiolenone synthase] + 5 CO2 + 5 NADP(+) + 5 CoA + 2 H2O. It carries out the reaction 19-(4-hydroxyphenyl)nonadecanoyl-[(phenol)carboxyphthiodiolenone synthase] + 2 (S)-methylmalonyl-CoA + 3 malonyl-CoA + 5 NADPH + 10 H(+) = C37-(phenol)carboxyphthiodiolenone-[(phenol)carboxyphthiodiolenone synthase] + 5 CO2 + 5 NADP(+) + 5 CoA + 2 H2O. The protein operates within lipid metabolism; fatty acid biosynthesis. Part of the PpsABCDE complex involved in the biosynthesis of the lipid core common to phthiocerols and phenolphthiocerols by successive additions of malonyl-CoA or methylmalonyl-CoA extender units. PpsA can accept as substrate the activated forms of either icosanoyl (C20), docosanoyl (C22) or lignoceroyl (C24) groups from FadD26, or a (4-hydroxyphenyl)-C17 or (4-hydroxyphenyl)-C19 fatty acyl from FadD29. PpsA initiates the biosynthesis and extends its substrate using a malonyl-CoA extender unit. The PpsB and PpsC proteins add the second and third malonyl-CoA extender units. PpsD adds an (R)-methylmalonyl unit and PpsE adds a second (R)-methylmalonyl unit. The incorporation of the methylmalonyl units results in formation of two branched methyl groups in the elongated product. This is Phenolphthiocerol/phthiocerol polyketide synthase subunit A (ppsA) from Mycobacterium bovis (strain ATCC BAA-935 / AF2122/97).